The following is a 365-amino-acid chain: Sulfate/thiosulfate import ATP-binding protein CysA (365 aa).

One can recognise an ABC transporter domain in the interval 3-237 (IEIANIKKSF…PATRFVLEFM (235 aa)). ATP is bound at residue 35–42 (GPSGSGKT).

The protein belongs to the ABC transporter superfamily. Sulfate/tungstate importer (TC 3.A.1.6) family. In terms of assembly, the complex is composed of two ATP-binding proteins (CysA), two transmembrane proteins (CysT and CysW) and a solute-binding protein (CysP).

The protein localises to the cell inner membrane. The catalysed reaction is sulfate(out) + ATP + H2O = sulfate(in) + ADP + phosphate + H(+). The enzyme catalyses thiosulfate(out) + ATP + H2O = thiosulfate(in) + ADP + phosphate + H(+). Its function is as follows. Part of the ABC transporter complex CysAWTP involved in sulfate/thiosulfate import. Responsible for energy coupling to the transport system. This is Sulfate/thiosulfate import ATP-binding protein CysA from Escherichia coli O6:H1 (strain CFT073 / ATCC 700928 / UPEC).